A 236-amino-acid polypeptide reads, in one-letter code: 2-C-methyl-D-erythritol 4-phosphate cytidylyltransferase (236 aa).

It belongs to the IspD/TarI cytidylyltransferase family. IspD subfamily.

It catalyses the reaction 2-C-methyl-D-erythritol 4-phosphate + CTP + H(+) = 4-CDP-2-C-methyl-D-erythritol + diphosphate. It participates in isoprenoid biosynthesis; isopentenyl diphosphate biosynthesis via DXP pathway; isopentenyl diphosphate from 1-deoxy-D-xylulose 5-phosphate: step 2/6. Catalyzes the formation of 4-diphosphocytidyl-2-C-methyl-D-erythritol from CTP and 2-C-methyl-D-erythritol 4-phosphate (MEP). The sequence is that of 2-C-methyl-D-erythritol 4-phosphate cytidylyltransferase from Burkholderia thailandensis (strain ATCC 700388 / DSM 13276 / CCUG 48851 / CIP 106301 / E264).